We begin with the raw amino-acid sequence, 315 residues long: Mitochondrial glutamate carrier 2 (315 aa).

3 Solcar repeats span residues 6 to 92, 100 to 210, and 219 to 308; these read LSIT…FRRL, RNLK…LNNL, and ASFA…GIGE. 3 consecutive transmembrane segments (helical) span residues 12–32, 61–81, and 106–126; these read LING…IDLA, FFGM…EKAI, and MLAG…MEML. Residues 141-160 form a disordered region; it reads QGSASAPSTSRSYTTGSAST. Over residues 142-159 the composition is skewed to polar residues; it reads GSASAPSTSRSYTTGSAS. The residue at position 145 (Ser145) is a Phosphoserine. The next 3 helical transmembrane spans lie at 185-205, 225-245, and 288-308; these read GLGA…PLFA, FVSG…LDVL, and ALVI…GIGE.

It belongs to the mitochondrial carrier (TC 2.A.29) family. In terms of tissue distribution, expressed in brain, to a lesser extent in testis, and poorly in all the other tissues.

It is found in the mitochondrion inner membrane. It carries out the reaction L-glutamate(in) + H(+)(in) = L-glutamate(out) + H(+)(out). Its function is as follows. Responsible for the transport of glutamate from the cytosol into the mitochondrial matrix with the concomitant import of a proton (symport system). The polypeptide is Mitochondrial glutamate carrier 2 (Homo sapiens (Human)).